The sequence spans 104 residues: Large ribosomal subunit protein uL24 (104 aa).

It belongs to the universal ribosomal protein uL24 family. As to quaternary structure, part of the 50S ribosomal subunit.

Its function is as follows. One of two assembly initiator proteins, it binds directly to the 5'-end of the 23S rRNA, where it nucleates assembly of the 50S subunit. Functionally, one of the proteins that surrounds the polypeptide exit tunnel on the outside of the subunit. This Hydrogenovibrio crunogenus (strain DSM 25203 / XCL-2) (Thiomicrospira crunogena) protein is Large ribosomal subunit protein uL24.